The primary structure comprises 437 residues: tRNA modification GTPase MnmE (437 aa).

The (6S)-5-formyl-5,6,7,8-tetrahydrofolate site is built by Arg21, Glu80, and Arg120. One can recognise a TrmE-type G domain in the interval 218–361 (GFVVVLAGPP…LLDRVAAAAG (144 aa)). Residue Asn228 participates in K(+) binding. GTP-binding positions include 228–233 (NAGKST), 247–253 (SPIPGTT), and 272–275 (DTAG). Ser232 is a Mg(2+) binding site. Residues Ser247, Ile249, and Thr252 each contribute to the K(+) site. Residue Thr253 participates in Mg(2+) binding. Lys437 is a (6S)-5-formyl-5,6,7,8-tetrahydrofolate binding site.

The protein belongs to the TRAFAC class TrmE-Era-EngA-EngB-Septin-like GTPase superfamily. TrmE GTPase family. In terms of assembly, homodimer. Heterotetramer of two MnmE and two MnmG subunits. It depends on K(+) as a cofactor.

It is found in the cytoplasm. In terms of biological role, exhibits a very high intrinsic GTPase hydrolysis rate. Involved in the addition of a carboxymethylaminomethyl (cmnm) group at the wobble position (U34) of certain tRNAs, forming tRNA-cmnm(5)s(2)U34. The polypeptide is tRNA modification GTPase MnmE (Methylobacterium sp. (strain 4-46)).